A 282-amino-acid chain; its full sequence is 2-dehydro-3-deoxyphosphooctonate aldolase (282 aa).

This sequence belongs to the KdsA family.

Its subcellular location is the cytoplasm. It carries out the reaction D-arabinose 5-phosphate + phosphoenolpyruvate + H2O = 3-deoxy-alpha-D-manno-2-octulosonate-8-phosphate + phosphate. It functions in the pathway carbohydrate biosynthesis; 3-deoxy-D-manno-octulosonate biosynthesis; 3-deoxy-D-manno-octulosonate from D-ribulose 5-phosphate: step 2/3. It participates in bacterial outer membrane biogenesis; lipopolysaccharide biosynthesis. The polypeptide is 2-dehydro-3-deoxyphosphooctonate aldolase (Shewanella woodyi (strain ATCC 51908 / MS32)).